Consider the following 169-residue polypeptide: MMRFLNHCSQGRSAWLLMILTALILESSALYFQHVMKLQPCVMCIYERVALFGVLSAGILGVIAPKTPLRWLAIILWIYSAWGGLQLAWQHTMMQLHPSPFNTCDFFVNFPSWLALNQWLPSVFEATGDCSVRQWQFLTLEMPQWLVGIFAAYLVVAALVLISQFFSRK.

Topologically, residues 1 to 14 (MMRFLNHCSQGRSA) are cytoplasmic. Residues 15-31 (WLLMILTALILESSALY) traverse the membrane as a helical segment. The Periplasmic segment spans residues 32-49 (FQHVMKLQPCVMCIYERV). Cys-41 and Cys-44 are disulfide-bonded. A helical membrane pass occupies residues 50–65 (ALFGVLSAGILGVIAP). Residues 66 to 71 (KTPLRW) are Cytoplasmic-facing. A helical membrane pass occupies residues 72 to 89 (LAIILWIYSAWGGLQLAW). Topologically, residues 90 to 144 (QHTMMQLHPSPFNTCDFFVNFPSWLALNQWLPSVFEATGDCSVRQWQFLTLEMPQ) are periplasmic. The cysteines at positions 104 and 130 are disulfide-linked. A helical transmembrane segment spans residues 145 to 163 (WLVGIFAAYLVVAALVLIS). At 164–169 (QFFSRK) the chain is on the cytoplasmic side.

The protein belongs to the DsbB family.

It localises to the cell inner membrane. In terms of biological role, required for disulfide bond formation in some periplasmic proteins. Acts by oxidizing the DsbA protein. This Photorhabdus laumondii subsp. laumondii (strain DSM 15139 / CIP 105565 / TT01) (Photorhabdus luminescens subsp. laumondii) protein is Disulfide bond formation protein B.